The chain runs to 151 residues: Hemoglobin-2 (151 aa).

At threonine 2 the chain carries N-acetylthreonine. The region spanning 3 to 148 (TLTNPQKAAI…ICKTLGDYMK (146 aa)) is the Globin domain. Histidine 97 lines the heme b pocket.

Belongs to the globin family. Homotetramer.

Its subcellular location is the cytoplasm. In Phacoides pectinatus (Thick lucine), this protein is Hemoglobin-2.